We begin with the raw amino-acid sequence, 107 residues long: Nucleoid-associated protein Daro_0807 (107 aa).

This sequence belongs to the YbaB/EbfC family. In terms of assembly, homodimer.

Its subcellular location is the cytoplasm. It is found in the nucleoid. Its function is as follows. Binds to DNA and alters its conformation. May be involved in regulation of gene expression, nucleoid organization and DNA protection. The protein is Nucleoid-associated protein Daro_0807 of Dechloromonas aromatica (strain RCB).